The following is an 87-amino-acid chain: Putative acyl-CoA-binding protein (87 aa).

Positions 1–86 constitute an ACB domain; that stretch reads MSSTFEQAAA…VDELKTKYGM (86 aa). An acyl-CoA contacts are provided by residues Lys-13, 28–32, Lys-50, Lys-54, and Tyr-73; that span reads YALFK.

Belongs to the ACBP family.

The protein resides in the cytoplasm. Its subcellular location is the nucleus. In terms of biological role, binds medium- and long-chain acyl-CoA esters with very high affinity and may function as an intracellular carrier of acyl-CoA esters. May enhance the activity of the ceramide synthase complex. The polypeptide is Putative acyl-CoA-binding protein (Schizosaccharomyces pombe (strain 972 / ATCC 24843) (Fission yeast)).